A 419-amino-acid chain; its full sequence is Bilin biosynthesis protein CpeY (419 aa).

In terms of biological role, involved in the biosynthesis of bilin. The polypeptide is Bilin biosynthesis protein CpeY (cpeY) (Synechococcus sp. (strain WH8020)).